Here is a 1154-residue protein sequence, read N- to C-terminus: Diacylglycerol kinase eta (1154 aa).

The segment at 1-54 (MAGAGYQHHPPGGAAVGTSAVSPTAAGPGEDSSDSEAEQGGPQKLIRKVSTSGQ) is disordered. The 94-residue stretch at 59 to 152 (TSIKEGQLLK…WISSLKSVQS (94 aa)) folds into the PH domain. Phorbol-ester/DAG-type zinc fingers lie at residues 169–219 (MHNW…TNNC) and 241–292 (PHQW…HPVC). In terms of domain architecture, DAGKc spans 322-457 (FCVSPLLVFV…LDRWSIMTYE (136 aa)). Disordered regions lie at residues 560–608 (QASR…AVKP), 634–678 (DEQT…APEA), and 1123–1154 (FKME…SPGN). Residues 573–586 (PEEDAVESSSEESL) are compositionally biased toward acidic residues. The span at 656–667 (DDSKDNDTKESP) shows a compositional bias: basic and acidic residues. A compositionally biased stretch (polar residues) spans 1131-1154 (QKTSSQPGPGDTESGSYEANSPGN).

The protein belongs to the eukaryotic diacylglycerol kinase family. Interacts with RAF1 and BRAF. Phosphorylated. Phosphorylation does not inhibit catalytic activity. Expressed in a wide variety of tissues. Most abundant in the brain and testis; also found in lung, spleen, and prostate (at protein level).

Its subcellular location is the cytoplasm. It is found in the cell membrane. The enzyme catalyses a 1,2-diacyl-sn-glycerol + ATP = a 1,2-diacyl-sn-glycero-3-phosphate + ADP + H(+). It catalyses the reaction 1,2-di-(9Z-octadecenoyl)-sn-glycerol + ATP = 1,2-di-(9Z-octadecenoyl)-sn-glycero-3-phosphate + ADP + H(+). Its pathway is lipid metabolism; glycerolipid metabolism. Functionally, diacylglycerol kinase that converts diacylglycerol/DAG into phosphatidic acid/phosphatidate/PA and regulates the respective levels of these two bioactive lipids. Thereby, acts as a central switch between the signaling pathways activated by these second messengers with different cellular targets and opposite effects in numerous biological processes. Plays a key role in promoting cell growth. Activates the Ras/B-Raf/C-Raf/MEK/ERK signaling pathway induced by EGF. Regulates the recruitment of RAF1 and BRAF from cytoplasm to membranes and their heterodimerization. In Mesocricetus auratus (Golden hamster), this protein is Diacylglycerol kinase eta (DGKH).